The chain runs to 109 residues: Putative double-stranded DNA mimic protein YciU (109 aa).

Belongs to the putative dsDNA mimic protein family.

Functionally, may act as a double-stranded DNA (dsDNA) mimic. Probably regulates the activity of a dsDNA-binding protein. This chain is Putative double-stranded DNA mimic protein YciU, found in Salmonella choleraesuis (strain SC-B67).